We begin with the raw amino-acid sequence, 92 residues long: Co-chaperonin GroES (92 aa).

This sequence belongs to the GroES chaperonin family. As to quaternary structure, heptamer of 7 subunits arranged in a ring. Interacts with the chaperonin GroEL.

It is found in the cytoplasm. Its function is as follows. Together with the chaperonin GroEL, plays an essential role in assisting protein folding. The GroEL-GroES system forms a nano-cage that allows encapsulation of the non-native substrate proteins and provides a physical environment optimized to promote and accelerate protein folding. GroES binds to the apical surface of the GroEL ring, thereby capping the opening of the GroEL channel. The polypeptide is Co-chaperonin GroES (Thermotoga neapolitana).